The following is a 213-amino-acid chain: Uracil phosphoribosyltransferase (213 aa).

Residues Arg78, Arg103, and 130–138 (DPMLATGGS) contribute to the 5-phospho-alpha-D-ribose 1-diphosphate site. Uracil is bound by residues Ile193 and 198-200 (GDA). Asp199 serves as a coordination point for 5-phospho-alpha-D-ribose 1-diphosphate.

Belongs to the UPRTase family. Mg(2+) serves as cofactor.

It carries out the reaction UMP + diphosphate = 5-phospho-alpha-D-ribose 1-diphosphate + uracil. The protein operates within pyrimidine metabolism; UMP biosynthesis via salvage pathway; UMP from uracil: step 1/1. Allosterically activated by GTP. Catalyzes the conversion of uracil and 5-phospho-alpha-D-ribose 1-diphosphate (PRPP) to UMP and diphosphate. This chain is Uracil phosphoribosyltransferase, found in Bordetella pertussis (strain Tohama I / ATCC BAA-589 / NCTC 13251).